Reading from the N-terminus, the 473-residue chain is Glutamine synthetase (473 aa).

Positions 15-100 (ENIKIIDLKF…ICSIKEPRTG (86 aa)) constitute a GS beta-grasp domain. Positions 107-473 (PRTIAAKAVE…PYEFSLYYDC (367 aa)) constitute a GS catalytic domain. Residue glutamate 132 coordinates Mn(2+). Glutamate 134 provides a ligand contact to Mg(2+). Glutamate 210 contacts ATP. 2 residues coordinate Mg(2+): glutamate 215 and glutamate 223. L-glutamate-binding positions include 267-268 (NG) and glycine 268. Mg(2+) is bound at residue histidine 272. ATP-binding positions include 274–276 (HQS) and serine 276. Positions 324, 330, and 342 each coordinate L-glutamate. ATP is bound by residues arginine 342, arginine 347, and lysine 356. Residue glutamate 361 coordinates Mn(2+). Arginine 363 lines the L-glutamate pocket. Tyrosine 401 carries the post-translational modification O-AMP-tyrosine.

It belongs to the glutamine synthetase family. In terms of assembly, oligomer of 12 subunits arranged in the form of two hexagons. The cofactor is Mg(2+).

Its subcellular location is the cytoplasm. The catalysed reaction is L-glutamate + NH4(+) + ATP = L-glutamine + ADP + phosphate + H(+). Inhibited by ADP (90%), AMP (80%), alanine (52%) and aspartate (41%). The activity of this enzyme could be controlled by adenylation under conditions of abundant glutamine. Functionally, involved in nitrogen metabolism via ammonium assimilation. Catalyzes the ATP-dependent biosynthesis of glutamine from glutamate and ammonia. The polypeptide is Glutamine synthetase (Synechocystis sp. (strain ATCC 27184 / PCC 6803 / Kazusa)).